A 123-amino-acid chain; its full sequence is MSIETLVEEIGKLTLTEASELVKSLEEKFGVSAAPAVVAGVAAAAPAAAAAEEQTEFDVVLTAAGESKINVIKVVRAITGLGLKEAKDMVDGAPKTVKEAVSKDEAEKLMKELKDAGASVELK.

This sequence belongs to the bacterial ribosomal protein bL12 family. As to quaternary structure, homodimer. Part of the ribosomal stalk of the 50S ribosomal subunit. Forms a multimeric L10(L12)X complex, where L10 forms an elongated spine to which 2 to 4 L12 dimers bind in a sequential fashion. Binds GTP-bound translation factors.

Functionally, forms part of the ribosomal stalk which helps the ribosome interact with GTP-bound translation factors. Is thus essential for accurate translation. The protein is Large ribosomal subunit protein bL12 of Chlorobium luteolum (strain DSM 273 / BCRC 81028 / 2530) (Pelodictyon luteolum).